The primary structure comprises 792 residues: Phosphoenolpyruvate synthase (792 aa).

The active-site Tele-phosphohistidine intermediate is the His-421. Substrate contacts are provided by Arg-511, Arg-578, Glu-680, Gly-701, Ser-702, Asn-703, and Asp-704. Glu-680 provides a ligand contact to Mg(2+). Asp-704 contributes to the Mg(2+) binding site. Cys-751 (proton donor) is an active-site residue.

It belongs to the PEP-utilizing enzyme family. Homodimer. It depends on Mg(2+) as a cofactor.

The catalysed reaction is pyruvate + ATP + H2O = phosphoenolpyruvate + AMP + phosphate + 2 H(+). The protein operates within carbohydrate biosynthesis; gluconeogenesis. With respect to regulation, activated by a Pi-dependent pyrophosphorylation and inactivated by an ADP-dependent phosphorylation on a regulatory threonine. Both reactions are mediated by the bifunctional serine/threonine kinase and phosphorylase PpsR. Its function is as follows. Catalyzes the phosphorylation of pyruvate to phosphoenolpyruvate. The sequence is that of Phosphoenolpyruvate synthase (ppsA) from Escherichia coli (strain K12).